The sequence spans 206 residues: Large ribosomal subunit protein uL4 (206 aa).

Residues 44–77 form a disordered region; sequence RQGTRAQKDRQTVKHSTKKPWRQKGTGRARAGMT. Residues 56 to 70 are compositionally biased toward basic residues; the sequence is VKHSTKKPWRQKGTG.

Belongs to the universal ribosomal protein uL4 family. As to quaternary structure, part of the 50S ribosomal subunit.

One of the primary rRNA binding proteins, this protein initially binds near the 5'-end of the 23S rRNA. It is important during the early stages of 50S assembly. It makes multiple contacts with different domains of the 23S rRNA in the assembled 50S subunit and ribosome. Functionally, forms part of the polypeptide exit tunnel. The chain is Large ribosomal subunit protein uL4 from Methylibium petroleiphilum (strain ATCC BAA-1232 / LMG 22953 / PM1).